A 1324-amino-acid chain; its full sequence is MAFSKGFRIYHKLDPPPFSLIVETRHKEECLMFESGAVAVLSSAEKEAIKGTYSKVLDAYGLLGVLRLNLGDIMLHYLVLVTGCMSVGKIQESEVFRVTSTEFISLRVDSSDEDRISEVRKVLNSGNFYFAWSASGVSLDLSLNAHRSLQEHTTDNRFSWNQSLHLHLKHYGVNCADWLLRLMCGGVEIRTIYAAHKQAKACLISRLSCERAGTRFNVRGTNDDGHVANFVETEQVVYLDDSVSSFIQIRGSVPLFWEQPGLQVGSHRVRMSRGFEANAPAFDRHFRTLKNLYGKQIIVNLLGSKEGEHMLSKAFQSHLKASEHAADIQMVNFDYHQMVKGGKAEKLHSVLKPQVQKFLDYGIFHFDGSEVQRCQSGTVRTNCLDCLDRTNSVQAFLGLEMLTKQLEALGLAEKPQLVTRFQEVFRSMWSVNGDSISKIYAGTGALEGKAKLKDGARSVSRTIQNNFFDSSKQEAIDVLLLGNTLNSDLADKARALLTTGSLRVSEQTLQSASSKVLKSMCENFYKYSKPKKIRVCVGTWNVNGGKQFRSIAFKNQTLTDWLLDAPKLAGIQEFQDKRSKPMDIFPIGFEEMVELNAGNIVNASTTNQKLWAAELQKTISRDNKYVLLASEQLVGVCLFVFIRPQHAPFIRDVAVDTVKTGMGGATGNKGAVAIRMLFHTTSLCFVCSHFAAGQSQVKERNDDFLEIARKLSFPMGRLLFSHDYVFWCGDFNYRIDLPNEEVKELIRQQNWDSLIAGDQLINQKNAGQIFRGFLEGKVTFAPTYKYDLFSDDYDTSEKCRTPAWTDRVLWRRRKWPFDRSAEDLDLLNASFQDESKILYTWTPGTLLHYGRAELKTSDHRPVVALIDIDIFEVEAEERQNIYKEVIAVQGPPDGTVLVSIKSSLPENNFFNDALIDELLQQFTNFGEVILIRFVEDKMWVTFLEGSSALNVLNLNGKELLGRTITITLKSPDWIKTLEEEMSLEKINVPLPSSTSSTLLGEDAEVTADFDMEGDVDDYSAEVEEILPQHLQPSSSSALARPPVLHPGPVPASHLPYRRGPVPSLPVRPSRAPSRTPGPPASQSSPVDTLPATQLQQKDSSQTLEPKRPPPPRPVAPPARPAPPQRPPPPSGARSPAPARERVWSTRKAQERPRRDNLGGSQLPPQGGLPGPGLAGHSAARPIIPPRAGVISAPESHGRVSAGRLTPESQRKTXEVLKGPALLPEPLKPQAALPVPPSLAPPSQEMQEPLIAVAAPLAQSALQPSLETPPQPPPRSRSSHSLPSDAPAAAAGATIRVTGEKQTGVSAVRLDCPLKSDPFEDLSLN.

Residues 119-442 (VRKVLNSGNF…GDSISKIYAG (324 aa)) form the SAC domain. Positions 475-859 (AIDVLLLGNT…GRAELKTSDH (385 aa)) are catalytic. 2 positions are modified to phosphoserine: Ser820 and Ser830. An RRM domain is found at 902–971 (SSLPENNFFN…RTITITLKSP (70 aa)). The disordered stretch occupies residues 1030 to 1324 (LQPSSSSALA…SDPFEDLSLN (295 aa)). The span at 1080–1103 (ASQSSPVDTLPATQLQQKDSSQTL) shows a compositional bias: polar residues. A compositionally biased stretch (pro residues) spans 1108 to 1130 (PPPPRPVAPPARPAPPQRPPPPS). Residues 1138–1156 (ARERVWSTRKAQERPRRDN) show a composition bias toward basic and acidic residues. Residue Arg1186 is modified to Omega-N-methylarginine. Thr1205 is subject to Phosphothreonine. Residue Ser1277 is modified to Phosphoserine. The segment covering 1278–1292 (SHSLPSDAPAAAAGA) has biased composition (low complexity).

Belongs to the synaptojanin family. This sequence in the central section; belongs to the inositol 1,4,5-trisphosphate 5-phosphatase family. In terms of assembly, interacts with ASH/GRB2. Interacts with PACSIN1, PACSIN2 and PACSIN3. Interacts with AMPH, SH3GL1, SH3GL2 and SH3GL3. Interacts with MYO1E (via SH3 domain). Interacts with BIN1 and DNM1. Interacts with EPS15. In terms of tissue distribution, ubiquitously expressed with highest levels in brain.

It localises to the cytoplasm. The protein localises to the perinuclear region. The catalysed reaction is a 1,2-diacyl-sn-glycero-3-phospho-(1D-myo-inositol-4,5-bisphosphate) + H2O = a 1,2-diacyl-sn-glycero-3-phospho-(1D-myo-inositol 4-phosphate) + phosphate. Phosphatase that acts on various phosphoinositides, including phosphatidylinositol 4-phosphate, phosphatidylinositol (4,5)-bisphosphate and phosphatidylinositol (3,4,5)-trisphosphate. Has a role in clathrin-mediated endocytosis. Hydrolyzes PIP2 bound to actin regulatory proteins resulting in the rearrangement of actin filaments downstream of tyrosine kinase and ASH/GRB2. In Bos taurus (Bovine), this protein is Synaptojanin-1 (SYNJ1).